Here is a 480-residue protein sequence, read N- to C-terminus: uncharacterized protein (480 aa).

This is an uncharacterized protein from Xylella fastidiosa (strain 9a5c).